Here is a 194-residue protein sequence, read N- to C-terminus: Adenylate kinase (194 aa).

Residue 11-16 (GSGKGT) participates in ATP binding. An NMP region spans residues 31–60 (STGELLRAEIKAQTELGQAAAGYINEGHLV). Residues Thr-32, Arg-37, 58–60 (HLV), 86–89 (GFPR), and Gln-93 each bind AMP. Residues 127–137 (NRGKISGRSDD) form an LID region. An ATP-binding site is contributed by Arg-128. Arg-134 and Arg-145 together coordinate AMP. Gly-173 serves as a coordination point for ATP.

This sequence belongs to the adenylate kinase family. As to quaternary structure, monomer.

It is found in the cytoplasm. It catalyses the reaction AMP + ATP = 2 ADP. It functions in the pathway purine metabolism; AMP biosynthesis via salvage pathway; AMP from ADP: step 1/1. Catalyzes the reversible transfer of the terminal phosphate group between ATP and AMP. Plays an important role in cellular energy homeostasis and in adenine nucleotide metabolism. This Porphyromonas gingivalis (strain ATCC 33277 / DSM 20709 / CIP 103683 / JCM 12257 / NCTC 11834 / 2561) protein is Adenylate kinase.